Reading from the N-terminus, the 1065-residue chain is Inversin (1065 aa).

ANK repeat units follow at residues 13 to 42 (SLAS…ALKD), 47 to 76 (FGRT…DVNK), 80 to 110 (SQRT…WMQK), 113 to 144 (EEMT…EVDT), 148 to 177 (NKQT…NIGI), 181 to 213 (EGKI…TESL), 220 to 250 (EGRT…NITS), 254 to 283 (LFRT…SGTI), 288 to 317 (QGAT…VKDD), 321 to 350 (EGRT…DIDI), 356 to 385 (YGGT…QVDA), 389 to 418 (MKHT…RVDL), 422 to 451 (DGHS…NPNV), 455 to 484 (AGRT…DPNI), 488 to 517 (EGRT…FPNQ), and 523 to 553 (ERYT…SIAA). N75 is modified (3-hydroxyasparagine). A D-box 1 motif is present at residues 490-498 (RTALHWSCN). The region spanning 555-584 (QDIAAFKIQAVYKGYKVRKAFRDRKNLLMK) is the IQ 1 domain. The span at 589-616 (RKDAAAKKREEENKRKEAEQQKGRRSPD) shows a compositional bias: basic and acidic residues. Disordered regions lie at residues 589-833 (RKDA…TPRN) and 847-886 (HLPQ…PLSG). Residues 627–640 (PSTQDVPSRQSRAP) are compositionally biased toward polar residues. S661 is subject to Phosphoserine. Over residues 677-686 (SSDLQGTNSR) the composition is skewed to polar residues. Basic and acidic residues-rich tracts occupy residues 687 to 697 (RPNETAREHSK), 706 to 715 (RPNEGSDGSR), 723 to 736 (EKSR…ERCA), 752 to 762 (GPDEKGEDSRR), 770 to 786 (HDSH…EPKA), and 853 to 863 (EELRSGARRLE). The short motif at 909-917 (RKELFRKKN) is the D-box 2 element. The IQ 2 domain occupies 916-945 (KNKAAAVIQRAWRSYQLRKHLSHLRHMKQL). A disordered region spans residues 976 to 999 (TTAVSKAPKSPSKGTSGTKSTKHS). Low complexity predominate over residues 983 to 994 (PKSPSKGTSGTK).

In terms of assembly, binds calmodulin via its IQ domains. Interacts with APC2. Interacts with alpha-, beta-, and gamma-catenin. Interacts with N-cadherin (CDH2). Interacts with microtubules. Interacts with NPHP1. Interacts with DVL1, PRICKLE (PRICKLE1 or PRICKLE2) and Strabismus (VANGL1 or VANGL2). Interacts with IQCB1; the interaction likely requires additional interactors. Component of a complex containing at least ANKS6, INVS, NEK8 and NPHP3. ANKS6 may organize complex assembly by linking INVS and NPHP3 to NEK8 and INVS may target the complex to the proximal ciliary axoneme. In terms of processing, may be ubiquitinated via its interaction with APC2. Hydroxylated at Asn-75, most probably by HIF1AN. As to expression, widely expressed. Strongly expressed in the primary cilia of renal tubular cells.

The protein resides in the cytoplasm. Its subcellular location is the cytoskeleton. It localises to the spindle. It is found in the membrane. The protein localises to the nucleus. The protein resides in the cell projection. Its subcellular location is the cilium. In terms of biological role, required for normal renal development and establishment of left-right axis. Probably acts as a molecular switch between different Wnt signaling pathways. Inhibits the canonical Wnt pathway by targeting cytoplasmic disheveled (DVL1) for degradation by the ubiquitin-proteasome. This suggests that it is required in renal development to oppose the repression of terminal differentiation of tubular epithelial cells by Wnt signaling. Involved in the organization of apical junctions in kidney cells together with NPHP1, NPHP4 and RPGRIP1L/NPHP8. Does not seem to be strictly required for ciliogenesis. The polypeptide is Inversin (INVS) (Homo sapiens (Human)).